The sequence spans 43 residues: Defensin-B (43 aa).

3 cysteine pairs are disulfide-bonded: C3–C34, C20–C39, and C24–C41.

It is found in the secreted. Functionally, antibacterial protein. Strong activity against the Gram-positive bacteria M.luteus, B.megaterium and S.aureus. Reduced activity against Gram-positive bacterium B.subtilis and weak activity against Gram-negative bacterium X.japonicus. No detectable activity against the Gram-negative bacteria E.asbriae, E.coli, P.aeruginosa and S.marcescens. The protein is Defensin-B of Anomala cuprea (Cupreous chafer beetle).